Reading from the N-terminus, the 288-residue chain is Phosphatidylserine decarboxylase proenzyme (288 aa).

Residues Asp-101, His-158, and Ser-262 each act as charge relay system; for autoendoproteolytic cleavage activity in the active site. Catalysis depends on Ser-262, which acts as the Schiff-base intermediate with substrate; via pyruvic acid; for decarboxylase activity. Ser-262 carries the post-translational modification Pyruvic acid (Ser); by autocatalysis.

It belongs to the phosphatidylserine decarboxylase family. PSD-B subfamily. Prokaryotic type I sub-subfamily. In terms of assembly, heterodimer of a large membrane-associated beta subunit and a small pyruvoyl-containing alpha subunit. Pyruvate is required as a cofactor. In terms of processing, is synthesized initially as an inactive proenzyme. Formation of the active enzyme involves a self-maturation process in which the active site pyruvoyl group is generated from an internal serine residue via an autocatalytic post-translational modification. Two non-identical subunits are generated from the proenzyme in this reaction, and the pyruvate is formed at the N-terminus of the alpha chain, which is derived from the carboxyl end of the proenzyme. The autoendoproteolytic cleavage occurs by a canonical serine protease mechanism, in which the side chain hydroxyl group of the serine supplies its oxygen atom to form the C-terminus of the beta chain, while the remainder of the serine residue undergoes an oxidative deamination to produce ammonia and the pyruvoyl prosthetic group on the alpha chain. During this reaction, the Ser that is part of the protease active site of the proenzyme becomes the pyruvoyl prosthetic group, which constitutes an essential element of the active site of the mature decarboxylase.

Its subcellular location is the cell membrane. The catalysed reaction is a 1,2-diacyl-sn-glycero-3-phospho-L-serine + H(+) = a 1,2-diacyl-sn-glycero-3-phosphoethanolamine + CO2. Its pathway is phospholipid metabolism; phosphatidylethanolamine biosynthesis; phosphatidylethanolamine from CDP-diacylglycerol: step 2/2. Catalyzes the formation of phosphatidylethanolamine (PtdEtn) from phosphatidylserine (PtdSer). The protein is Phosphatidylserine decarboxylase proenzyme of Alkalilimnicola ehrlichii (strain ATCC BAA-1101 / DSM 17681 / MLHE-1).